A 55-amino-acid polypeptide reads, in one-letter code: Large ribosomal subunit protein bL33 (55 aa).

Belongs to the bacterial ribosomal protein bL33 family.

The protein is Large ribosomal subunit protein bL33 of Rhodopseudomonas palustris (strain HaA2).